Consider the following 302-residue polypeptide: Phosphoribosylaminoimidazole-succinocarboxamide synthase (302 aa).

This sequence belongs to the SAICAR synthetase family.

It catalyses the reaction 5-amino-1-(5-phospho-D-ribosyl)imidazole-4-carboxylate + L-aspartate + ATP = (2S)-2-[5-amino-1-(5-phospho-beta-D-ribosyl)imidazole-4-carboxamido]succinate + ADP + phosphate + 2 H(+). The protein operates within purine metabolism; IMP biosynthesis via de novo pathway; 5-amino-1-(5-phospho-D-ribosyl)imidazole-4-carboxamide from 5-amino-1-(5-phospho-D-ribosyl)imidazole-4-carboxylate: step 1/2. The sequence is that of Phosphoribosylaminoimidazole-succinocarboxamide synthase from Cupriavidus necator (strain ATCC 17699 / DSM 428 / KCTC 22496 / NCIMB 10442 / H16 / Stanier 337) (Ralstonia eutropha).